A 308-amino-acid chain; its full sequence is Ribosomal RNA large subunit methyltransferase F (308 aa).

Belongs to the methyltransferase superfamily. METTL16/RlmF family.

The protein localises to the cytoplasm. The enzyme catalyses adenosine(1618) in 23S rRNA + S-adenosyl-L-methionine = N(6)-methyladenosine(1618) in 23S rRNA + S-adenosyl-L-homocysteine + H(+). Specifically methylates the adenine in position 1618 of 23S rRNA. This is Ribosomal RNA large subunit methyltransferase F from Salmonella dublin (strain CT_02021853).